The chain runs to 190 residues: NADH-quinone oxidoreductase subunit B (190 aa).

[4Fe-4S] cluster contacts are provided by Cys-39, Cys-40, Cys-104, and Cys-135.

The protein belongs to the complex I 20 kDa subunit family. As to quaternary structure, NDH-1 is composed of 14 different subunits. Subunits NuoB, C, D, E, F, and G constitute the peripheral sector of the complex. [4Fe-4S] cluster is required as a cofactor.

Its subcellular location is the cell inner membrane. It catalyses the reaction a quinone + NADH + 5 H(+)(in) = a quinol + NAD(+) + 4 H(+)(out). In terms of biological role, NDH-1 shuttles electrons from NADH, via FMN and iron-sulfur (Fe-S) centers, to quinones in the respiratory chain. The immediate electron acceptor for the enzyme in this species is believed to be a menaquinone. Couples the redox reaction to proton translocation (for every two electrons transferred, four hydrogen ions are translocated across the cytoplasmic membrane), and thus conserves the redox energy in a proton gradient. The protein is NADH-quinone oxidoreductase subunit B of Chlorobium phaeobacteroides (strain BS1).